Consider the following 224-residue polypeptide: Virulence transcriptional regulatory protein PhoP (224 aa).

The Response regulatory domain occupies 3-117 (RVLVVEDNAL…EVMARMQALM (115 aa)). Asp-52 bears the 4-aspartylphosphate mark. Positions 125–223 (SQVINISPFQ…VRGQGYLFEL (99 aa)) form a DNA-binding region, ompR/PhoB-type.

Post-translationally, phosphorylated by PhoQ.

It is found in the cytoplasm. In terms of biological role, member of the two-component regulatory system PhoQ/PhoP which regulates the expression of genes involved in virulence and resistance to host defense antimicrobial peptides. Promotes intramacrophage survival of S.typhi. Is required to enhance bacterial resistance to bile in the human intestinal cells. The chain is Virulence transcriptional regulatory protein PhoP (phoP) from Salmonella typhi.